Here is a 726-residue protein sequence, read N- to C-terminus: Catalase-peroxidase (726 aa).

Residues 1–33 (MSTTDDTHNTLSTGKCPFHQGGHDRSAGAGTAS) form a disordered region. The tryptophyl-tyrosyl-methioninium (Trp-Tyr) (with M-252) cross-link spans 105-226 (WHGAGTYRSI…LGATEMGLIY (122 aa)). Catalysis depends on H106, which acts as the Proton acceptor. Positions 226–252 (YVNPEGPDHSGEPLSAAAAIRATFGNM) form a cross-link, tryptophyl-tyrosyl-methioninium (Tyr-Met) (with W-105). H267 serves as a coordination point for heme b.

This sequence belongs to the peroxidase family. Peroxidase/catalase subfamily. Homodimer or homotetramer. Requires heme b as cofactor. Post-translationally, formation of the three residue Trp-Tyr-Met cross-link is important for the catalase, but not the peroxidase activity of the enzyme.

The catalysed reaction is H2O2 + AH2 = A + 2 H2O. The enzyme catalyses 2 H2O2 = O2 + 2 H2O. Functionally, bifunctional enzyme with both catalase and broad-spectrum peroxidase activity. The sequence is that of Catalase-peroxidase from Salmonella schwarzengrund (strain CVM19633).